The primary structure comprises 375 residues: Alanine racemase (375 aa).

Lys-40 (proton acceptor; specific for D-alanine) is an active-site residue. Residue Lys-40 is modified to N6-(pyridoxal phosphate)lysine. Arg-140 lines the substrate pocket. The active-site Proton acceptor; specific for L-alanine is Tyr-268. Met-315 is a binding site for substrate.

This sequence belongs to the alanine racemase family. Pyridoxal 5'-phosphate serves as cofactor.

The enzyme catalyses L-alanine = D-alanine. The protein operates within amino-acid biosynthesis; D-alanine biosynthesis; D-alanine from L-alanine: step 1/1. Its function is as follows. Catalyzes the interconversion of L-alanine and D-alanine. May also act on other amino acids. The sequence is that of Alanine racemase (alr) from Limosilactobacillus reuteri (strain DSM 20016) (Lactobacillus reuteri).